Here is a 287-residue protein sequence, read N- to C-terminus: 3-methyl-2-oxobutanoate hydroxymethyltransferase (287 aa).

The Mg(2+) site is built by aspartate 57 and aspartate 96. 3-methyl-2-oxobutanoate contacts are provided by residues 57-58 (DS), aspartate 96, and lysine 125. Glutamate 127 serves as a coordination point for Mg(2+). Glutamate 194 serves as the catalytic Proton acceptor.

Belongs to the PanB family. Homodecamer; pentamer of dimers. Mg(2+) serves as cofactor.

The protein localises to the cytoplasm. The catalysed reaction is 3-methyl-2-oxobutanoate + (6R)-5,10-methylene-5,6,7,8-tetrahydrofolate + H2O = 2-dehydropantoate + (6S)-5,6,7,8-tetrahydrofolate. It functions in the pathway cofactor biosynthesis; (R)-pantothenate biosynthesis; (R)-pantoate from 3-methyl-2-oxobutanoate: step 1/2. Its function is as follows. Catalyzes the reversible reaction in which hydroxymethyl group from 5,10-methylenetetrahydrofolate is transferred onto alpha-ketoisovalerate to form ketopantoate. The polypeptide is 3-methyl-2-oxobutanoate hydroxymethyltransferase (Methylobacterium sp. (strain 4-46)).